Consider the following 291-residue polypeptide: Nucleotide-binding protein jk1004 (291 aa).

ATP is bound at residue 16 to 23; it reads GMSGAGRR. 67-70 provides a ligand contact to GTP; it reads DVRS.

It belongs to the RapZ-like family.

Its function is as follows. Displays ATPase and GTPase activities. This chain is Nucleotide-binding protein jk1004, found in Corynebacterium jeikeium (strain K411).